The chain runs to 150 residues: 3-dehydroquinate dehydratase (150 aa).

Y26 (proton acceptor) is an active-site residue. N77, H83, and D90 together coordinate substrate. H103 serves as the catalytic Proton donor. Residues 104–105 (LS) and R114 contribute to the substrate site.

It belongs to the type-II 3-dehydroquinase family. In terms of assembly, homododecamer.

The enzyme catalyses 3-dehydroquinate = 3-dehydroshikimate + H2O. The protein operates within metabolic intermediate biosynthesis; chorismate biosynthesis; chorismate from D-erythrose 4-phosphate and phosphoenolpyruvate: step 3/7. In terms of biological role, catalyzes a trans-dehydration via an enolate intermediate. This Citrobacter koseri (strain ATCC BAA-895 / CDC 4225-83 / SGSC4696) protein is 3-dehydroquinate dehydratase.